Consider the following 327-residue polypeptide: Lipoyl synthase (327 aa).

Residues C74, C79, C85, C100, C104, C107, and S314 each contribute to the [4Fe-4S] cluster site. Residues 86-303 (FSGGTATFMI…AEEGERMGFK (218 aa)) form the Radical SAM core domain.

It belongs to the radical SAM superfamily. Lipoyl synthase family. The cofactor is [4Fe-4S] cluster.

The protein localises to the cytoplasm. It catalyses the reaction [[Fe-S] cluster scaffold protein carrying a second [4Fe-4S](2+) cluster] + N(6)-octanoyl-L-lysyl-[protein] + 2 oxidized [2Fe-2S]-[ferredoxin] + 2 S-adenosyl-L-methionine + 4 H(+) = [[Fe-S] cluster scaffold protein] + N(6)-[(R)-dihydrolipoyl]-L-lysyl-[protein] + 4 Fe(3+) + 2 hydrogen sulfide + 2 5'-deoxyadenosine + 2 L-methionine + 2 reduced [2Fe-2S]-[ferredoxin]. The protein operates within protein modification; protein lipoylation via endogenous pathway; protein N(6)-(lipoyl)lysine from octanoyl-[acyl-carrier-protein]: step 2/2. In terms of biological role, catalyzes the radical-mediated insertion of two sulfur atoms into the C-6 and C-8 positions of the octanoyl moiety bound to the lipoyl domains of lipoate-dependent enzymes, thereby converting the octanoylated domains into lipoylated derivatives. The sequence is that of Lipoyl synthase from Pseudomonas paraeruginosa (strain DSM 24068 / PA7) (Pseudomonas aeruginosa (strain PA7)).